We begin with the raw amino-acid sequence, 1012 residues long: ATP-dependent DNA helicase MPH1 (1012 aa).

Residues 94–261 (IVQKSLYQNT…EVVNNLNISN (168 aa)) form the Helicase ATP-binding domain. 107–114 (IPTGMGKT) provides a ligand contact to ATP. The DEAH box motif lies at 209–212 (DEAH). Residues 430-654 (KLQKIINELS…NFVEYKKSDR (225 aa)) enclose the Helicase C-terminal domain. Residues 493–555 (DEGFIRKNKP…AQISGMNQKQ (63 aa)) are disordered. Residues 498–510 (RKNKPKGRKKADR) show a composition bias toward basic residues. Residues 511–537 (LKRLEEDKQKQLSKAKQKEQEKVERSS) show a composition bias toward basic and acidic residues.

It belongs to the DEAD box helicase family. DEAH subfamily. FANCM sub-subfamily. As to quaternary structure, interacts with the MHF histone-fold complex to form the FANCM-MHF complex.

It is found in the nucleus. It carries out the reaction ATP + H2O = ADP + phosphate + H(+). Its function is as follows. ATP-dependent DNA helicase involved in DNA damage repair by homologous recombination and in genome maintenance. Capable of unwinding D-loops. Plays a role in limiting crossover recombinants during mitotic DNA double-strand break (DSB) repair. Component of a FANCM-MHF complex which promotes gene conversion at blocked replication forks, probably by reversal of the stalled fork. This Vanderwaltozyma polyspora (strain ATCC 22028 / DSM 70294 / BCRC 21397 / CBS 2163 / NBRC 10782 / NRRL Y-8283 / UCD 57-17) (Kluyveromyces polysporus) protein is ATP-dependent DNA helicase MPH1.